The chain runs to 853 residues: DNA mismatch repair protein MutS (853 aa).

614–621 is an ATP binding site; sequence GPNMGGKS.

It belongs to the DNA mismatch repair MutS family.

This protein is involved in the repair of mismatches in DNA. It is possible that it carries out the mismatch recognition step. This protein has a weak ATPase activity. The chain is DNA mismatch repair protein MutS from Escherichia fergusonii (strain ATCC 35469 / DSM 13698 / CCUG 18766 / IAM 14443 / JCM 21226 / LMG 7866 / NBRC 102419 / NCTC 12128 / CDC 0568-73).